The following is a 467-amino-acid chain: Protein indeterminate-domain 6, chloroplastic (467 aa).

A chloroplast-targeting transit peptide spans 1–20 (MSSSYNTIALSSTPTFLLSS). Residues 38-65 (TMVQQQPTSSVAPPPKKRRNQPGNPNPD) form a disordered region. A compositionally biased stretch (polar residues) spans 39 to 48 (MVQQQPTSSV). The residue at position 72 (Ser-72) is a Phosphoserine. 2 C2H2-type zinc fingers span residues 82–104 (FLCEVCNKGFQREQNLQLHRRGH) and 123–153 (YLCPEPSCVHHDPARALGDLTGIKKHYYRKH). The C2H2-type 2; degenerate zinc finger occupies 158–181 (WKCDKCSKRYAVQSDWKAHSKTCG). The Zn(2+) site is built by Cys-160, Cys-163, His-176, Cys-180, Cys-187, Cys-189, His-202, and Cys-206. Residues 185 to 208 (YRCDCGTIFSRRDSYITHRAFCDA) form a CCHC-type 2; atypical zinc finger. Positions 195–207 (RRDSYITHRAFCD) are SHR-binding. A disordered region spans residues 440-467 (NGRGGRSGGPPLDAEMKFSHPNHPYGKA).

The protein resides in the plastid. It is found in the chloroplast. Probable transcription factor. This chain is Protein indeterminate-domain 6, chloroplastic, found in Arabidopsis thaliana (Mouse-ear cress).